A 481-amino-acid polypeptide reads, in one-letter code: F-box protein At1g49360 (481 aa).

The F-box domain maps to leucine 105–tyrosine 156.

The chain is F-box protein At1g49360 from Arabidopsis thaliana (Mouse-ear cress).